Here is a 392-residue protein sequence, read N- to C-terminus: Chaperone protein DnaJ 2 (392 aa).

Positions 10 to 75 (DFYKELGVSS…AKRKEYDETR (66 aa)) constitute a J domain. A CR-type zinc finger spans residues 161–239 (GVAMPLRLTS…CKGTGVTTRT (79 aa)). Residues Cys174, Cys177, Cys191, Cys194, Cys213, Cys216, Cys227, and Cys230 each contribute to the Zn(2+) site. 4 CXXCXGXG motif repeats span residues 174–181 (CTNCHGSG), 191–198 (CPTCNGSG), 213–220 (CTDCRGSG), and 227–234 (CDECKGTG).

It belongs to the DnaJ family. Homodimer. Zn(2+) is required as a cofactor.

It localises to the cytoplasm. Its function is as follows. Participates actively in the response to hyperosmotic and heat shock by preventing the aggregation of stress-denatured proteins and by disaggregating proteins, also in an autonomous, DnaK-independent fashion. Unfolded proteins bind initially to DnaJ; upon interaction with the DnaJ-bound protein, DnaK hydrolyzes its bound ATP, resulting in the formation of a stable complex. GrpE releases ADP from DnaK; ATP binding to DnaK triggers the release of the substrate protein, thus completing the reaction cycle. Several rounds of ATP-dependent interactions between DnaJ, DnaK and GrpE are required for fully efficient folding. Also involved, together with DnaK and GrpE, in the DNA replication of plasmids through activation of initiation proteins. This is Chaperone protein DnaJ 2 from Mycolicibacterium paratuberculosis (strain ATCC BAA-968 / K-10) (Mycobacterium paratuberculosis).